A 436-amino-acid chain; its full sequence is Trigger factor (436 aa).

In terms of domain architecture, PPIase FKBP-type spans 163-248 (GDTVVIDFDG…IHEVKEKQLP (86 aa)).

Belongs to the FKBP-type PPIase family. Tig subfamily.

The protein localises to the cytoplasm. It catalyses the reaction [protein]-peptidylproline (omega=180) = [protein]-peptidylproline (omega=0). Involved in protein export. Acts as a chaperone by maintaining the newly synthesized protein in an open conformation. Functions as a peptidyl-prolyl cis-trans isomerase. In Levilactobacillus brevis (strain ATCC 367 / BCRC 12310 / CIP 105137 / JCM 1170 / LMG 11437 / NCIMB 947 / NCTC 947) (Lactobacillus brevis), this protein is Trigger factor.